The sequence spans 159 residues: MTHCCSPCCQPTCCRTTCWKPTTVTTCSSTPCCQPSCCVSSCCQPCCRPTCCQNTCCQPICVTSCCQPSCCSTPCCQPTCCGQTSCGSSCGQSSSCAPVYCRRTCYHPTTVCLPGCLNQSCGSNCCQPCCRPACCETTCCRTTCFQPTCVSSCCQPSCC.

15 repeat units span residues 8–12, 13–17, 32–36, 37–41, 46–50, 51–55, 56–60, 65–69, 70–74, 75–79, 80–84, 129–133, 134–138, 139–142, and 153–157. Residues 8–157 are 15 X 5 AA repeats of C-C-[RQVSGE]-[SPSNQ]-[TASPI]; sequence CCQPTCCRTT…TCVSSCCQPS (150 aa).

The protein belongs to the KRTAP type 9 family. In terms of assembly, interacts with hair keratins.

In the hair cortex, hair keratin intermediate filaments are embedded in an interfilamentous matrix, consisting of hair keratin-associated proteins (KRTAP), which are essential for the formation of a rigid and resistant hair shaft through their extensive disulfide bond cross-linking with abundant cysteine residues of hair keratins. The matrix proteins include the high-sulfur and high-glycine-tyrosine keratins. This chain is Keratin-associated protein 9-8 (KRTAP9-8), found in Homo sapiens (Human).